Reading from the N-terminus, the 409-residue chain is Na(+)-translocating NADH-quinone reductase subunit F (409 aa).

The helical transmembrane segment at 5 to 25 (FIFGIGAFTAIVLVLAVVILI) threads the bilayer. One can recognise a 2Fe-2S ferredoxin-type domain in the interval 34-128 (GDITISINDD…SMDVELPEEV (95 aa)). 4 residues coordinate [2Fe-2S] cluster: Cys71, Cys77, Cys80, and Cys112. One can recognise an FAD-binding FR-type domain in the interval 131–271 (VKKWECTVIS…SGPFGEFFAK (141 aa)).

The protein belongs to the NqrF family. Composed of six subunits; NqrA, NqrB, NqrC, NqrD, NqrE and NqrF. [2Fe-2S] cluster serves as cofactor. It depends on FAD as a cofactor.

The protein localises to the cell inner membrane. The enzyme catalyses a ubiquinone + n Na(+)(in) + NADH + H(+) = a ubiquinol + n Na(+)(out) + NAD(+). In terms of biological role, NQR complex catalyzes the reduction of ubiquinone-1 to ubiquinol by two successive reactions, coupled with the transport of Na(+) ions from the cytoplasm to the periplasm. The first step is catalyzed by NqrF, which accepts electrons from NADH and reduces ubiquinone-1 to ubisemiquinone by a one-electron transfer pathway. The sequence is that of Na(+)-translocating NADH-quinone reductase subunit F from Actinobacillus succinogenes (strain ATCC 55618 / DSM 22257 / CCUG 43843 / 130Z).